A 547-amino-acid chain; its full sequence is Germacrene A synthase (547 aa).

Residues Asp300, Asp304, Asp443, and Glu451 each contribute to the Mg(2+) site. Positions 300–304 (DDTYD) match the DDXXD motif motif.

The protein belongs to the terpene synthase family. Tpsa subfamily. Mg(2+) serves as cofactor. The cofactor is Mn(2+). In terms of tissue distribution, expressed in leaves.

It is found in the plastid. It localises to the chloroplast. The enzyme catalyses (2E,6E)-farnesyl diphosphate = germacrene A + diphosphate. It catalyses the reaction (2E,6E)-farnesyl diphosphate = (1S,2S,4R)-beta-elemene + diphosphate. It participates in secondary metabolite biosynthesis; terpenoid biosynthesis. Functionally, sesquiterpene synthase involved in the biosynthesis of volatile compounds widely used in aromatherapy and folk medicine, and present in culinary herbs. Mediates the conversion of (2E,6E)-farnesyl diphosphate (FPP) into germacrene A and beta-elemene. Not able to use (2E)-geranyl diphosphate (GPP) as substrate. In Lavandula pedunculata subsp. lusitanica (French lavender), this protein is Germacrene A synthase.